The sequence spans 383 residues: Putative glutamate--cysteine ligase 2 (383 aa).

Belongs to the glutamate--cysteine ligase type 2 family. YbdK subfamily.

The enzyme catalyses L-cysteine + L-glutamate + ATP = gamma-L-glutamyl-L-cysteine + ADP + phosphate + H(+). ATP-dependent carboxylate-amine ligase which exhibits weak glutamate--cysteine ligase activity. This chain is Putative glutamate--cysteine ligase 2, found in Clavibacter sepedonicus (Clavibacter michiganensis subsp. sepedonicus).